The chain runs to 24 residues: Superoxide dismutase [Cu-Zn], chloroplastic (24 aa).

It belongs to the Cu-Zn superoxide dismutase family. Homodimer. Requires Cu cation as cofactor. It depends on Zn(2+) as a cofactor.

It localises to the plastid. Its subcellular location is the chloroplast. The catalysed reaction is 2 superoxide + 2 H(+) = H2O2 + O2. Its function is as follows. Destroys radicals which are normally produced within the cells and which are toxic to biological systems. The chain is Superoxide dismutase [Cu-Zn], chloroplastic from Picea abies (Norway spruce).